We begin with the raw amino-acid sequence, 445 residues long: Methylenetetrahydrofolate--tRNA-(uracil-5-)-methyltransferase TrmFO (445 aa).

Residue 10–15 coordinates FAD; the sequence is GGGLAG.

This sequence belongs to the MnmG family. TrmFO subfamily. It depends on FAD as a cofactor.

The protein resides in the cytoplasm. It catalyses the reaction uridine(54) in tRNA + (6R)-5,10-methylene-5,6,7,8-tetrahydrofolate + NADH + H(+) = 5-methyluridine(54) in tRNA + (6S)-5,6,7,8-tetrahydrofolate + NAD(+). The catalysed reaction is uridine(54) in tRNA + (6R)-5,10-methylene-5,6,7,8-tetrahydrofolate + NADPH + H(+) = 5-methyluridine(54) in tRNA + (6S)-5,6,7,8-tetrahydrofolate + NADP(+). Functionally, catalyzes the folate-dependent formation of 5-methyl-uridine at position 54 (M-5-U54) in all tRNAs. This Microcystis aeruginosa (strain NIES-843 / IAM M-2473) protein is Methylenetetrahydrofolate--tRNA-(uracil-5-)-methyltransferase TrmFO.